The following is a 385-amino-acid chain: WD repeat-containing protein 74 (385 aa).

6 WD repeats span residues 40 to 80 (RREE…FQGQ), 83 to 122 (CPGG…ASSD), 128 to 168 (RVGP…EPLF), 179 to 220 (DLRV…RRPV), 224 to 266 (TYGE…GCLK), and 267 to 306 (GLAG…GLEH). Serine 214 carries the post-translational modification Phosphoserine. Lysine 311 is modified (N6-methyllysine). Residues 320 to 385 (SGRDNWEDEP…KKKRPGSTSS (66 aa)) are required for nucleolar and nuclear location. Positions 323–385 (DNWEDEPQEP…KKKRPGSTSS (63 aa)) are disordered. Basic residues predominate over residues 372 to 385 (ARRRKKKRPGSTSS).

Isoform 1 interacts (through WDR repeats) with NVL; the interaction is independent of RNA or pre-60S ribosome particles. Isoform 2 does not interact with NVL. Interacts with MTREX; the interaction dissociation in a late stage of rRNA synthesis is required for appropriate maturation of pre-60S particles and depends on the ATPase activity of NVL.

Its subcellular location is the nucleus. It is found in the nucleolus. Functionally, regulatory protein of the MTREX-exosome complex involved in the synthesis of the 60S ribosomal subunit. Participates in an early cleavage of the pre-rRNA processing pathway in cooperation with NVL. This chain is WD repeat-containing protein 74 (WDR74), found in Bos taurus (Bovine).